The primary structure comprises 110 residues: Ferredoxin (110 aa).

2 consecutive 4Fe-4S ferredoxin-type domains span residues 2-30 (TYIV…YEGE) and 31-60 (FMLV…PESP). [3Fe-4S] cluster contacts are provided by C9 and C17. [4Fe-4S] cluster contacts are provided by C21, C40, C43, and C46. C50 is a binding site for [3Fe-4S] cluster.

Requires [4Fe-4S] cluster as cofactor. The cofactor is [3Fe-4S] cluster.

Its function is as follows. Ferredoxins are iron-sulfur proteins that transfer electrons in a wide variety of metabolic reactions. This is Ferredoxin (fdxA) from Rickettsia typhi (strain ATCC VR-144 / Wilmington).